Here is a 167-residue protein sequence, read N- to C-terminus: MADEATRRVVSEIPVLKTNAGPRDRELWVQRLKEEYQSLIRYVENNKNSDNDWFRLESNKEGTRWFGKCWYIHDFLKYEFDIEFEIPITYPTTAPEIAVPELDGKTAKMYRGGKICLTDHFKPLWARNVPKFGLAHLMALGLGPWLAVEVPDLIQKGVIQHKEKCSQ.

Residue Cys-116 is the Glycyl thioester intermediate of the active site. Residue Lys-122 forms a Glycyl lysine isopeptide (Lys-Gly) (interchain with G-Cter in UFM1) linkage.

It belongs to the ubiquitin-conjugating enzyme family. UFC1 subfamily. As to quaternary structure, interacts with UBA5 (via C-terminus). Interacts with UFL1. Interacts with UFM1. Interacts with KIRREL3. Post-translationally, ufmylated at Lys-122. Deufmylated by UFSP1.

Functionally, E2-like enzyme which specifically catalyzes the second step in ufmylation. Accepts the ubiquitin-like modifier UFM1 from the E1 enzyme UBA5 and forms an intermediate with UFM1 via a thioester linkage. Ufmylation is involved in various processes, such as ribosome recycling, response to DNA damage, interferon response or reticulophagy (also called ER-phagy). The polypeptide is Ubiquitin-fold modifier-conjugating enzyme 1 (Mus musculus (Mouse)).